The primary structure comprises 417 residues: Gamma-glutamyl phosphate reductase (417 aa).

Belongs to the gamma-glutamyl phosphate reductase family.

It localises to the cytoplasm. The enzyme catalyses L-glutamate 5-semialdehyde + phosphate + NADP(+) = L-glutamyl 5-phosphate + NADPH + H(+). It participates in amino-acid biosynthesis; L-proline biosynthesis; L-glutamate 5-semialdehyde from L-glutamate: step 2/2. Its function is as follows. Catalyzes the NADPH-dependent reduction of L-glutamate 5-phosphate into L-glutamate 5-semialdehyde and phosphate. The product spontaneously undergoes cyclization to form 1-pyrroline-5-carboxylate. The chain is Gamma-glutamyl phosphate reductase from Escherichia coli O81 (strain ED1a).